The chain runs to 165 residues: Pyruvoyl-dependent arginine decarboxylase (165 aa).

Serine 53 carries the pyruvic acid (Ser) modification.

The protein belongs to the PdaD family. The cofactor is pyruvate.

It catalyses the reaction L-arginine + H(+) = agmatine + CO2. In Methanococcus aeolicus (strain ATCC BAA-1280 / DSM 17508 / OCM 812 / Nankai-3), this protein is Pyruvoyl-dependent arginine decarboxylase.